A 402-amino-acid chain; its full sequence is uncharacterized protein (402 aa).

A run of 12 helical transmembrane segments spans residues 23 to 43 (IVSVVMFTFIGYLTIGIPLAV), 52 to 72 (LGYGSVLAGLVISLQYLATLL), 90 to 110 (VLYGMAGSAASGLFMLLSVAI), 121 to 141 (LLVGRLVLGAAESLVGSAAIG), 158 to 178 (WNGIASYGAIALGAPLGVLLV), 180 to 200 (WLGLWSMGASIVLLGALGFAL), 228 to 248 (GMGLALGAIGFGTIATFITLY), 255 to 275 (ANAVLCLSAFGGCFIGARLLF), 282 to 302 (LGGFRVAIICLGVESLGLLLL), 309 to 329 (WVGLAGAALTGFGFSLVFPAF), 351 to 371 (LFVDLSLGITGPLVGFVANLF), and 375 to 395 (SMFLFACLASLSGLALAIALH).

The protein belongs to the major facilitator superfamily. YhhS family.

The protein resides in the cell inner membrane. This is an uncharacterized protein from Pseudomonas aeruginosa (strain UCBPP-PA14).